We begin with the raw amino-acid sequence, 399 residues long: CCA-adding enzyme (399 aa).

G32 and R35 together coordinate ATP. CTP-binding residues include G32 and R35. The Mg(2+) site is built by D45 and D47. 5 residues coordinate ATP: R116, D159, R162, R165, and R168. CTP contacts are provided by R116, D159, R162, R165, and R168.

It belongs to the tRNA nucleotidyltransferase/poly(A) polymerase family. Bacterial CCA-adding enzyme type 3 subfamily. As to quaternary structure, homodimer. Mg(2+) serves as cofactor.

It catalyses the reaction a tRNA precursor + 2 CTP + ATP = a tRNA with a 3' CCA end + 3 diphosphate. The catalysed reaction is a tRNA with a 3' CCA end + 2 CTP + ATP = a tRNA with a 3' CCACCA end + 3 diphosphate. Functionally, catalyzes the addition and repair of the essential 3'-terminal CCA sequence in tRNAs without using a nucleic acid template. Adds these three nucleotides in the order of C, C, and A to the tRNA nucleotide-73, using CTP and ATP as substrates and producing inorganic pyrophosphate. tRNA 3'-terminal CCA addition is required both for tRNA processing and repair. Also involved in tRNA surveillance by mediating tandem CCA addition to generate a CCACCA at the 3' terminus of unstable tRNAs. While stable tRNAs receive only 3'-terminal CCA, unstable tRNAs are marked with CCACCA and rapidly degraded. The sequence is that of CCA-adding enzyme from Streptococcus pneumoniae serotype 19F (strain G54).